The sequence spans 201 residues: 3-isopropylmalate dehydratase small subunit (201 aa).

The protein belongs to the LeuD family. LeuD type 1 subfamily. Heterodimer of LeuC and LeuD.

It catalyses the reaction (2R,3S)-3-isopropylmalate = (2S)-2-isopropylmalate. It functions in the pathway amino-acid biosynthesis; L-leucine biosynthesis; L-leucine from 3-methyl-2-oxobutanoate: step 2/4. Its function is as follows. Catalyzes the isomerization between 2-isopropylmalate and 3-isopropylmalate, via the formation of 2-isopropylmaleate. The sequence is that of 3-isopropylmalate dehydratase small subunit from Shewanella denitrificans (strain OS217 / ATCC BAA-1090 / DSM 15013).